Here is a 447-residue protein sequence, read N- to C-terminus: N-succinylarginine dihydrolase (447 aa).

Substrate-binding positions include 19 to 28 (AGLSFGNEAS), asparagine 110, and 137 to 138 (HR). Glutamate 174 is a catalytic residue. Residue arginine 213 participates in substrate binding. Residue histidine 249 is part of the active site. Residues aspartate 251 and asparagine 364 each contribute to the substrate site. Cysteine 370 (nucleophile) is an active-site residue.

This sequence belongs to the succinylarginine dihydrolase family. In terms of assembly, homodimer.

The enzyme catalyses N(2)-succinyl-L-arginine + 2 H2O + 2 H(+) = N(2)-succinyl-L-ornithine + 2 NH4(+) + CO2. The protein operates within amino-acid degradation; L-arginine degradation via AST pathway; L-glutamate and succinate from L-arginine: step 2/5. Functionally, catalyzes the hydrolysis of N(2)-succinylarginine into N(2)-succinylornithine, ammonia and CO(2). The protein is N-succinylarginine dihydrolase of Yersinia pestis bv. Antiqua (strain Antiqua).